We begin with the raw amino-acid sequence, 190 residues long: Probable RNA-binding protein 18 (190 aa).

Positions 25-106 (HRLWIGNLDP…KKLVVRWAHA (82 aa)) constitute an RRM domain. The tract at residues 166–190 (VYSYFKPPDKKRTTPYSRTAWKSRR) is disordered.

The protein is Probable RNA-binding protein 18 (Rbm18) of Mus musculus (Mouse).